Consider the following 338-residue polypeptide: Dehydrogenase/reductase SDR family member 7 (338 aa).

A signal peptide spans Met1–Ala28. Ser60 and Ile62 together coordinate NAD(+). A substrate-binding site is contributed by Ser190. NAD(+) contacts are provided by Tyr203, Lys207, and Ser239. Tyr203 (proton acceptor) is an active-site residue.

Belongs to the short-chain dehydrogenases/reductases (SDR) family.

Its subcellular location is the endoplasmic reticulum membrane. It catalyses the reaction all-trans-retinol + NADP(+) = all-trans-retinal + NADPH + H(+). The catalysed reaction is 5alpha-androstane-3alpha,17beta-diol + NADP(+) = 17beta-hydroxy-5alpha-androstan-3-one + NADPH + H(+). In terms of biological role, NADPH-dependent oxidoreductase which catalyzes the reduction of a variety of compounds bearing carbonyl groups including steroids, retinoids and xenobiotics. Catalyzes the reduction/inactivation of 5alpha-dihydrotestosterone to 3alpha-androstanediol, with a possible role in the modulation of androgen receptor function. Involved in the reduction of all-trans-retinal to all-trans-retinol. Converts cortisone to 20beta-dihydrocortisone in vitro, although the physiological relevance of this activity is questionable. Reduces exogenous compounds such as quinones (1,2-naphtoquinone, 9,10-phenantrenequinone and benzoquinone) and other xenobiotics (alpha-diketones) in vitro, suggesting a role in the biotransformation of xenobiotics with carbonyl group. A dehydrogenase activity has not been detected so far. May play a role as tumor suppressor. The protein is Dehydrogenase/reductase SDR family member 7 of Mus musculus (Mouse).